The primary structure comprises 155 residues: MRHNKSGRRLGRNSSHRAAMMRNMVTSLLEHEKITTTDARAKELRKVVDRMITLGKRGDLHARRQAIKVIQDRKVVGKLFELIAPRYTDRPGGYTRIIKLGNRLGDNAPQVIIELVEEEFTPRVRKAADDKAVAESVATEVAEATEAAADTKQAE.

This sequence belongs to the bacterial ribosomal protein bL17 family. As to quaternary structure, part of the 50S ribosomal subunit. Contacts protein L32.

The protein is Large ribosomal subunit protein bL17 of Syntrophotalea carbinolica (strain DSM 2380 / NBRC 103641 / GraBd1) (Pelobacter carbinolicus).